Consider the following 129-residue polypeptide: Small ribosomal subunit protein uS8c (129 aa).

This sequence belongs to the universal ribosomal protein uS8 family. In terms of assembly, part of the 30S ribosomal subunit.

It localises to the plastid. It is found in the chloroplast. In terms of biological role, one of the primary rRNA binding proteins, it binds directly to 16S rRNA central domain where it helps coordinate assembly of the platform of the 30S subunit. The polypeptide is Small ribosomal subunit protein uS8c (rps8) (Nephroselmis olivacea (Green alga)).